The sequence spans 1350 residues: ABC transporter C family member 13 (1350 aa).

The region spanning N107 to G390 is the ABC transmembrane type-1 1 domain. Transmembrane regions (helical) follow at residues I111–F131, T143–L163, I215–Q235, and L240–I260. A disordered region spans residues E462–N481. Low complexity predominate over residues T470–N481. Positions T473–K693 constitute an ABC transporter 1 domain. Residue G505–T512 participates in ATP binding. In terms of domain architecture, ABC transmembrane type-1 2 spans K774–S1061. Helical transmembrane passes span G776 to F796, D816 to I836, I887 to F907, I909 to V929, I1003 to L1023, and G1029 to V1049. One can recognise an ABC transporter 2 domain in the interval I1103 to K1337. G1137–S1144 lines the ATP pocket.

It belongs to the ABC transporter superfamily. ABCC family. Conjugate transporter (TC 3.A.1.208) subfamily.

The protein resides in the membrane. This chain is ABC transporter C family member 13 (abcC13), found in Dictyostelium discoideum (Social amoeba).